The primary structure comprises 438 residues: Probable exopolygalacturonase B (438 aa).

An N-terminal signal peptide occupies residues 1 to 15 (MYLLPLTLFLTAAFG). N-linked (GlcNAc...) asparagine glycans are attached at residues Asn-118, Asn-185, and Asn-225. Residues 209–248 (TNDVSFDNVYIHAFSTNASSDPANTDGMDSLDVDGVSFTN) form a PbH1 1 repeat. The active-site Proton donor is Asp-255. Cys-257 and Cys-274 are oxidised to a cystine. N-linked (GlcNAc...) asparagine glycans are attached at residues Asn-263 and Asn-275. His-278 is a catalytic residue. PbH1 repeat units lie at residues 295–316 (IENVYIENVTLLNGQNGARLKA) and 327–348 (INNVTYKNIQIQNTDAPIVLDQ). 4 N-linked (GlcNAc...) asparagine glycosylation sites follow: Asn-302, Asn-329, Asn-354, and Asn-366. The cysteines at positions 392 and 398 are disulfide-linked. The PbH1 4 repeat unit spans residues 398 to 430 (CTNITLSNVNLTSPKGTAEIVCDDIQGGIGVDC). N-linked (GlcNAc...) asparagine glycosylation is found at Asn-400 and Asn-407.

The protein belongs to the glycosyl hydrolase 28 family.

Its subcellular location is the secreted. The catalysed reaction is [(1-&gt;4)-alpha-D-galacturonosyl](n) + H2O = alpha-D-galacturonate + [(1-&gt;4)-alpha-D-galacturonosyl](n-1). Functionally, specific in hydrolyzing the terminal glycosidic bond of polygalacturonic acid and oligogalacturonates. This is Probable exopolygalacturonase B (pgxB) from Aspergillus niger (strain ATCC MYA-4892 / CBS 513.88 / FGSC A1513).